The following is a 296-amino-acid chain: Meiotically up-regulated gene 2 protein (296 aa).

The protein belongs to the UPF0612 family.

The protein localises to the cytoplasm. Its subcellular location is the nucleus. Functionally, has a role in meiosis. This Schizosaccharomyces pombe (strain 972 / ATCC 24843) (Fission yeast) protein is Meiotically up-regulated gene 2 protein (mug2).